The sequence spans 136 residues: NADPH-dependent 7-cyano-7-deazaguanine reductase (136 aa).

C50 (thioimide intermediate) is an active-site residue. D57 functions as the Proton donor in the catalytic mechanism. Residues 72–74 (YEL) and 91–92 (HE) contribute to the substrate site.

Belongs to the GTP cyclohydrolase I family. QueF type 1 subfamily.

It is found in the cytoplasm. It catalyses the reaction 7-aminomethyl-7-carbaguanine + 2 NADP(+) = 7-cyano-7-deazaguanine + 2 NADPH + 3 H(+). It participates in tRNA modification; tRNA-queuosine biosynthesis. Its function is as follows. Catalyzes the NADPH-dependent reduction of 7-cyano-7-deazaguanine (preQ0) to 7-aminomethyl-7-deazaguanine (preQ1). This Prochlorococcus marinus (strain MIT 9515) protein is NADPH-dependent 7-cyano-7-deazaguanine reductase.